The primary structure comprises 187 residues: Hypoxanthine/guanine phosphoribosyltransferase (187 aa).

Belongs to the purine/pyrimidine phosphoribosyltransferase family. Archaeal HPRT subfamily. Homodimer.

Its subcellular location is the cytoplasm. The catalysed reaction is IMP + diphosphate = hypoxanthine + 5-phospho-alpha-D-ribose 1-diphosphate. It catalyses the reaction GMP + diphosphate = guanine + 5-phospho-alpha-D-ribose 1-diphosphate. Its pathway is purine metabolism; IMP biosynthesis via salvage pathway; IMP from hypoxanthine: step 1/1. In terms of biological role, catalyzes a salvage reaction resulting in the formation of IMP that is energically less costly than de novo synthesis. In Methanococcus voltae (strain ATCC BAA-1334 / A3), this protein is Hypoxanthine/guanine phosphoribosyltransferase.